A 409-amino-acid chain; its full sequence is Tryptophan synthase beta chain (409 aa).

Lysine 98 bears the N6-(pyridoxal phosphate)lysine mark.

The protein belongs to the TrpB family. In terms of assembly, tetramer of two alpha and two beta chains. Pyridoxal 5'-phosphate is required as a cofactor.

It carries out the reaction (1S,2R)-1-C-(indol-3-yl)glycerol 3-phosphate + L-serine = D-glyceraldehyde 3-phosphate + L-tryptophan + H2O. The protein operates within amino-acid biosynthesis; L-tryptophan biosynthesis; L-tryptophan from chorismate: step 5/5. Functionally, the beta subunit is responsible for the synthesis of L-tryptophan from indole and L-serine. This chain is Tryptophan synthase beta chain, found in Jannaschia sp. (strain CCS1).